A 366-amino-acid polypeptide reads, in one-letter code: MEMLEDLESLRFEFGIPEEERYWLYLQGRYRGLMIKGCAHAAFFCKMFSTLSNLLQNLPRTIHPRTVSFDNAATEDELLTVGIIGCGHLGKQLTNVLLKTVPIPAENLQISTRRPESLGELRKLGVRCVYDNAAVASWAKVLFLCCLPAQLPNICLEIQSKLNKHCTVYSFVSAIPLPRLKSLLNHTNILRPQYQFAEDYDNIWGENEEVPIALQDTTIIRGTCPYNNLGGVILNVKWIEGLCYALINACTSRSVFHSQVLKLLNKLLLPMHLESCTTDPESCPQFNLTDFMSKSYVKNLYQKRPFPWFDLTTVQLKETPFSQHISATPSLQDHISLLYCEVFGLTISEEELPYISTVIRPLVEEK.

It belongs to the pyrroline-5-carboxylate reductase family.

Functionally, probable oxidoreductase. The protein is NADP-dependent oxidoreductase domain-containing protein 1 (Noxred1) of Mus musculus (Mouse).